We begin with the raw amino-acid sequence, 468 residues long: ATP synthase subunit beta (468 aa).

155–162 (GGAGVGKT) is an ATP binding site.

This sequence belongs to the ATPase alpha/beta chains family. F-type ATPases have 2 components, CF(1) - the catalytic core - and CF(0) - the membrane proton channel. CF(1) has five subunits: alpha(3), beta(3), gamma(1), delta(1), epsilon(1). CF(0) has three main subunits: a(1), b(2) and c(9-12). The alpha and beta chains form an alternating ring which encloses part of the gamma chain. CF(1) is attached to CF(0) by a central stalk formed by the gamma and epsilon chains, while a peripheral stalk is formed by the delta and b chains.

The protein resides in the cell membrane. It catalyses the reaction ATP + H2O + 4 H(+)(in) = ADP + phosphate + 5 H(+)(out). Its function is as follows. Produces ATP from ADP in the presence of a proton gradient across the membrane. The catalytic sites are hosted primarily by the beta subunits. This is ATP synthase subunit beta from Streptococcus agalactiae serotype III (strain NEM316).